Here is a 277-residue protein sequence, read N- to C-terminus: Ribosomal RNA small subunit methyltransferase A (277 aa).

Positions 27, 29, 54, 75, 95, and 118 each coordinate S-adenosyl-L-methionine.

This sequence belongs to the class I-like SAM-binding methyltransferase superfamily. rRNA adenine N(6)-methyltransferase family. RsmA subfamily.

The protein localises to the cytoplasm. The catalysed reaction is adenosine(1518)/adenosine(1519) in 16S rRNA + 4 S-adenosyl-L-methionine = N(6)-dimethyladenosine(1518)/N(6)-dimethyladenosine(1519) in 16S rRNA + 4 S-adenosyl-L-homocysteine + 4 H(+). Specifically dimethylates two adjacent adenosines (A1518 and A1519) in the loop of a conserved hairpin near the 3'-end of 16S rRNA in the 30S particle. May play a critical role in biogenesis of 30S subunits. The chain is Ribosomal RNA small subunit methyltransferase A from Chlamydia trachomatis serovar L2 (strain ATCC VR-902B / DSM 19102 / 434/Bu).